The following is a 339-amino-acid chain: MNIFPIVKYSVAEDSYTTDSSHINWSHYSDGGFTLSLTSGLLQIRQHEELIQSINLLDLWHQLIPGTKEKCLTLLSRAPCMNIRAFTNNVMKRFQVKFPSDVHYMKAKVEFEKLGLVFKDAKSSSEKKQFNNSQSQSNNSQELSLMNNAYNKSSAQQPNLLLQPSYIPMTQTATTAVNNSTNYVNPAPLQHVMPNAEIFSNTPPLKRFRGDAGMTQMPLRSDTSIESITASQQPTWDENVVITSSPFNPNRNAYSYGANSQYPIIAATPLNSQTQASWVAQPENQAYANLIPSPPTTSQILPTELTEEEKQLRSKVLFYLKQDSFIQLCQSLERVWNKM.

Its function is as follows. May be involved primarily in the early steps of meiotic recombination. This is Meiotic recombination protein rec7 (rec7) from Schizosaccharomyces pombe (strain 972 / ATCC 24843) (Fission yeast).